The sequence spans 245 residues: MTAPLTLVLIPARMAATRLPGKPLLDIGGVPMIVHVLRRALAASIGRVAVATDTPEIAEAVIAHGGEVVMTRADHPSGSDRIHEALQTLDPERRIETVINLQGDFPTIRPEQIGAVLAPLADPAVDIATLAAEIHTEEESTNPNVVKVVGSPIRDNLLRALYFTRATAPYGDGPRYHHIGLYAYRRAALERFVSLPPSPLEQREKLEQLRALEAGMRIDVGIVDSVPRGVDTPADLETARRALGF.

This sequence belongs to the KdsB family.

The protein localises to the cytoplasm. It carries out the reaction 3-deoxy-alpha-D-manno-oct-2-ulosonate + CTP = CMP-3-deoxy-beta-D-manno-octulosonate + diphosphate. It participates in nucleotide-sugar biosynthesis; CMP-3-deoxy-D-manno-octulosonate biosynthesis; CMP-3-deoxy-D-manno-octulosonate from 3-deoxy-D-manno-octulosonate and CTP: step 1/1. It functions in the pathway bacterial outer membrane biogenesis; lipopolysaccharide biosynthesis. Activates KDO (a required 8-carbon sugar) for incorporation into bacterial lipopolysaccharide in Gram-negative bacteria. This chain is 3-deoxy-manno-octulosonate cytidylyltransferase, found in Rhodopseudomonas palustris (strain BisB5).